The following is a 58-amino-acid chain: Large ribosomal subunit protein eL20 (58 aa).

A disordered region spans residues Thr-37–Ala-58. The span at Pro-48–Ala-58 shows a compositional bias: basic and acidic residues.

The protein belongs to the eukaryotic ribosomal protein eL20 family. Part of the 50S ribosomal subunit. Binds 23S rRNA.

This chain is Large ribosomal subunit protein eL20, found in Halorubrum lacusprofundi (strain ATCC 49239 / DSM 5036 / JCM 8891 / ACAM 34).